Consider the following 744-residue polypeptide: Junctophilin-3 (744 aa).

Residues 1 to 723 are Cytoplasmic-facing; sequence MSSGGRFNFD…LKSSTGSAPI (723 aa). 6 MORN repeats span residues 15 to 37, 39 to 60, 61 to 82, 83 to 105, 107 to 129, and 130 to 152; these read YCGG…KGQG, YTGS…SGNT, YQGT…GKWV, YKGE…GNGA, YEGT…DGGT, and YQGQ…PYGM. The disordered stretch occupies residues 230–252; the sequence is SKSSLASQRSKQSSFRSEAGMST. A compositionally biased stretch (low complexity) spans 231-244; sequence KSSLASQRSKQSSF. MORN repeat units lie at residues 288-310 and 311-333; these read YVGE…DGLK and YEGE…DGTK. Phosphoserine is present on serine 440. Position 451 is a phosphothreonine (threonine 451). 2 disordered regions span residues 451–603 and 624–677; these read TPLQ…LLEP and CPQD…ESLR. Residue serine 457 is modified to Phosphoserine. Residue threonine 471 is modified to Phosphothreonine. A phosphoserine mark is found at serine 475 and serine 506. A phosphoserine mark is found at serine 699 and serine 706. Residues 724–744 form a helical; Anchor for type IV membrane protein membrane-spanning segment; it reads LVVMVILLNIGVAILFINFFI.

This sequence belongs to the junctophilin family. As to expression, specifically expressed in brain. Highest levels in the olfactory tubercle, caudate putamen, nucleus accumbens, hippocampal formation, piriform cortex and cerebellar cortex. Expressed in disctete neurons sites. In hippocampal formation, expressed in dendrites of hippocampal pyramidal and denate granule cells. In cerebellum, it is highly expressed in Purkinge cells, while it is weakly expressed in granular cells.

The protein localises to the cell membrane. Its subcellular location is the endoplasmic reticulum membrane. Its function is as follows. Junctophilins contribute to the formation of junctional membrane complexes (JMCs) which link the plasma membrane with the endoplasmic or sarcoplasmic reticulum in excitable cells. Provides a structural foundation for functional cross-talk between the cell surface and intracellular calcium release channels. JPH3 is brain-specific and appears to have an active role in certain neurons involved in motor coordination and memory. In Mus musculus (Mouse), this protein is Junctophilin-3 (Jph3).